The following is a 358-amino-acid chain: MSTAVRSGRVSSWESFCQWVTNTDNRIYVGWFGVLMIPCLLAATICYIIAFIAAPPVDIDGIREPVAGSFLYGNNIISGAVIPSSNAIGLHFYPIWEAATLDEWLYNGGPYQLVVFHFLIGISAYMGRQWELSYRLGMRPWICVAYAAPLSAAMVVFLIYPFGQGSFSDGMPLGISGTFNFMLVFQAEHNILMHPFHMLGVAGVFGGSLFSAMHGSLVTSSLVRETTESESQNYGYKFGQEEETYNIVAAHGYFGRLIFQYASFNNSRSLHFFLAAWPVVGIWFTSMGIATMAFNLNGFNFNQSILDAQGKVVPTWADVLNRANLGMEVMHERNAHNFPLDLATTESAPVALQAPAVG.

A run of 3 helical transmembrane segments spans residues 28–45 (YVGW…AATI), 117–132 (HFLI…QWEL), and 141–155 (WICV…AAMV). H117 is a binding site for chlorophyll a. Pheophytin a is bound at residue Y125. 2 residues coordinate [CaMn4O5] cluster: D169 and E188. Residues 196–217 (FHMLGVAGVFGGSLFSAMHGSL) traverse the membrane as a helical segment. H197 serves as a coordination point for chlorophyll a. A quinone-binding positions include H214 and 263–264 (SF). Residue H214 participates in Fe cation binding. H271 contributes to the Fe cation binding site. Residues 273-287 (FLAAWPVVGIWFTSM) traverse the membrane as a helical segment. Positions 331, 332, 341, and 343 each coordinate [CaMn4O5] cluster. The propeptide occupies 344–358 (TTESAPVALQAPAVG).

The protein belongs to the reaction center PufL/M/PsbA/D family. As to quaternary structure, PSII is composed of 1 copy each of membrane proteins PsbA, PsbB, PsbC, PsbD, PsbE, PsbF, PsbH, PsbI, PsbJ, PsbK, PsbL, PsbM, PsbT, PsbX, PsbY, PsbZ, Psb30/Ycf12, peripheral proteins PsbO, CyanoQ (PsbQ), PsbU, PsbV and a large number of cofactors. It forms dimeric complexes. The D1/D2 heterodimer binds P680, chlorophylls that are the primary electron donor of PSII, and subsequent electron acceptors. It shares a non-heme iron and each subunit binds pheophytin, quinone, additional chlorophylls, carotenoids and lipids. D1 provides most of the ligands for the Mn4-Ca-O5 cluster of the oxygen-evolving complex (OEC). There is also a Cl(-1) ion associated with D1 and D2, which is required for oxygen evolution. The PSII complex binds additional chlorophylls, carotenoids and specific lipids. serves as cofactor. Post-translationally, tyr-160 forms a radical intermediate that is referred to as redox-active TyrZ, YZ or Y-Z. C-terminally processed by CtpA; processing is essential to allow assembly of the oxygen-evolving complex and thus photosynthetic growth.

The protein localises to the cellular thylakoid membrane. The catalysed reaction is 2 a plastoquinone + 4 hnu + 2 H2O = 2 a plastoquinol + O2. Functionally, photosystem II (PSII) is a light-driven water:plastoquinone oxidoreductase that uses light energy to abstract electrons from H(2)O, generating O(2) and a proton gradient subsequently used for ATP formation. It consists of a core antenna complex that captures photons, and an electron transfer chain that converts photonic excitation into a charge separation. The D1/D2 (PsbA/PsbD) reaction center heterodimer binds P680, the primary electron donor of PSII as well as several subsequent electron acceptors. The chain is Photosystem II protein D1 2 from Synechococcus sp. (strain RCC307).